The sequence spans 417 residues: Inhibitor of growth protein 3 (417 aa).

Disordered stretches follow at residues Leu126–Lys165, Ser177–Asn198, and Gln284–Leu320. Residues His136–Ser152 show a composition bias toward basic residues. The span at Ser156 to Lys165 shows a compositional bias: basic and acidic residues. Positions Ser177 to Cys187 are enriched in polar residues. Low complexity-rich tracts occupy residues Asn189–Asn198, Gln284–Ser294, and Asn303–Leu320. The PHD-type zinc finger occupies Pro359–Ala408. Cys362, Cys364, Cys375, Cys380, His386, Cys389, Cys402, and Cys405 together coordinate Zn(2+).

It belongs to the ING family. In terms of assembly, interacts with H3K4me3 and to a lesser extent with H3K4me2. Component of the NuA4 histone acetyltransferase complex.

The protein resides in the nucleus. Its function is as follows. Component of the NuA4 histone acetyltransferase (HAT) complex which is involved in transcriptional activation of select genes principally by acetylation of nucleosomal histone H4 and H2A. This modification may both alter nucleosome - DNA interactions and promote interaction of the modified histones with other proteins which positively regulate transcription. NuA4 may also play a direct role in DNA repair when directly recruited to sites of DNA damage. The sequence is that of Inhibitor of growth protein 3 (ing3) from Xenopus tropicalis (Western clawed frog).